The chain runs to 562 residues: MVKIVTVKTKAYQDQKPGTSGLRKRVKVFQSSSNYAENFIQSIISTVEPAQRQEATLVVGGDGRFYMKEAIQLIVRIAAANGIGRLVIGQNGILSTPAVSCIIRKIKAIGGIILTASHNPGGPNGDFGIKFNISNGGPAPEAITDKIFQISKTIEEYAICPDLHVDLGVLGKQQFDLENKFKPFTVEIVDSVEAYATMLRNIFDFNALKELLSGPNRLKIRIDAMHGVVGPYVKKILCEELGAPANSAVNCVPLEDFGGHHPDPNLTYAADLVETMKTGEHDFGAAFDGDGDRNMILGKHGFFVNPSDSVAVIAANIFSIPYFQQTGVRGFARSMPTSGALDRVANATKIALYETPTGWKFFGNLMDASKLSLCGEESFGTGSDHIREKDGLWAVLAWLSILATRKQSVEDILKDHWQKYGRNFFTRYDYEEVEAEGANKMMKELEALISDRSFVGKQFPVGDKVYTVEKIDNFEYSDPVDGSISRNQGLRLLFADGSRIIFRLSGTGSAGATIRLYIDSYEKDLAKIYQDPQVMLAPLISIALKVSQLQEKTGRTAPTVIT.

N-acetylmethionine is present on methionine 1. Lysine 16 bears the N6-acetyllysine mark. Residue arginine 23 participates in alpha-D-glucose 1,6-bisphosphate binding. At threonine 115 the chain carries Phosphothreonine. Serine 117 contacts alpha-D-glucose 1,6-bisphosphate. Serine 117 functions as the Phosphoserine intermediate in the catalytic mechanism. Serine 117 is a binding site for Mg(2+). Serine 117 and serine 134 each carry phosphoserine. Threonine 185 is subject to Phosphothreonine. The residue at position 213 (serine 213) is a Phosphoserine. Mg(2+) is bound by residues aspartate 288, aspartate 290, and aspartate 292. Residues aspartate 292 and arginine 293 each contribute to the alpha-D-glucose 1,6-bisphosphate site. At lysine 349 the chain carries N6-acetyllysine. Position 353 is a phosphotyrosine (tyrosine 353). Alpha-D-glucose 1,6-bisphosphate is bound at residue threonine 357. Serine 369 carries the post-translational modification Phosphoserine. 3 residues coordinate alpha-D-glucose 1,6-bisphosphate: glutamate 376, serine 378, and lysine 389. Residue serine 378 is modified to Phosphoserine. Lysine 419 is subject to N6-succinyllysine. A Phosphothreonine; by PAK1 modification is found at threonine 467. Phosphoserine is present on residues serine 477, serine 485, and serine 505. Threonine 507 is modified (phosphothreonine). Phosphoserine occurs at positions 509 and 541.

The protein belongs to the phosphohexose mutase family. Monomer. Mg(2+) serves as cofactor. Post-translationally, phosphorylation at Thr-467 by PAK1 significantly enhances enzymatic activity.

The protein localises to the cytoplasm. The enzyme catalyses alpha-D-glucose 1-phosphate = alpha-D-glucose 6-phosphate. It carries out the reaction O-phospho-L-seryl-[protein] + alpha-D-glucose 1-phosphate = alpha-D-glucose 1,6-bisphosphate + L-seryl-[protein]. The catalysed reaction is alpha-D-glucose 1,6-bisphosphate + L-seryl-[protein] = O-phospho-L-seryl-[protein] + alpha-D-glucose 6-phosphate. Functionally, catalyzes the reversible isomerization of alpha-D-glucose 1-phosphate to alpha-D-glucose 6-phosphate. The mechanism proceeds via the intermediate compound alpha-D-glucose 1,6-bisphosphate. This enzyme participates in both the breakdown and synthesis of glucose. The sequence is that of Phosphoglucomutase-1 (PGM1) from Bos taurus (Bovine).